The sequence spans 88 residues: uncharacterized protein (88 aa).

This is an uncharacterized protein from Thermoproteus tenax virus 1 (strain KRA1) (TTV1).